The primary structure comprises 273 residues: MANEHAIGFMDSGVGGLTVVKQALKQLPRETVYFIGDQARLPYGPRPAEQVRTFSFQMADFLMAKQIKMLVIACNTATAAALPALRQQLSIPVIGVIAPGSRAALKASHRNRIGVIATEGTIRSNAYRDAILTKDPTATVVSQACPKFVPLVESNEYQSTVAKRVVAETLKQLKKQDVDTLVLGCTHYPLLRPLIQNVMGPGVTLIDSGAETVNDVSAVLDYLDIANDRSTKRYPDEYYTTGAADQFEAIARNWLGQPDFHAQHIDLGSEAND.

Residues 11–12 (DS) and 43–44 (YG) contribute to the substrate site. The active-site Proton donor/acceptor is the cysteine 74. 75–76 (NT) serves as a coordination point for substrate. The active-site Proton donor/acceptor is cysteine 185. 186-187 (TH) serves as a coordination point for substrate.

It belongs to the aspartate/glutamate racemases family.

It carries out the reaction L-glutamate = D-glutamate. It participates in cell wall biogenesis; peptidoglycan biosynthesis. In terms of biological role, provides the (R)-glutamate required for cell wall biosynthesis. The sequence is that of Glutamate racemase from Lactiplantibacillus plantarum (strain ATCC BAA-793 / NCIMB 8826 / WCFS1) (Lactobacillus plantarum).